A 193-amino-acid chain; its full sequence is Protein GrpE (193 aa).

The tract at residues 1 to 40 (MTEENRPQPDQPELTVTSESSVQETGENKARTPEQEGEAM) is disordered. Residues 14–25 (LTVTSESSVQET) are compositionally biased toward polar residues.

Belongs to the GrpE family. As to quaternary structure, homodimer.

The protein resides in the cytoplasm. Participates actively in the response to hyperosmotic and heat shock by preventing the aggregation of stress-denatured proteins, in association with DnaK and GrpE. It is the nucleotide exchange factor for DnaK and may function as a thermosensor. Unfolded proteins bind initially to DnaJ; upon interaction with the DnaJ-bound protein, DnaK hydrolyzes its bound ATP, resulting in the formation of a stable complex. GrpE releases ADP from DnaK; ATP binding to DnaK triggers the release of the substrate protein, thus completing the reaction cycle. Several rounds of ATP-dependent interactions between DnaJ, DnaK and GrpE are required for fully efficient folding. In Nitrosospira multiformis (strain ATCC 25196 / NCIMB 11849 / C 71), this protein is Protein GrpE.